The chain runs to 408 residues: DNA polymerase processivity factor (408 aa).

The Nuclear localization signal signature appears at 344-353 (KKRRNLLTKR).

Belongs to the herpesviridae DNA polymerase processivity factor family. Interacts with the DNA polymerase catalytic subunit. Interacts with the origin-binding protein.

It is found in the host nucleus. In terms of biological role, plays an essential role in viral DNA replication by acting as the polymerase accessory subunit. Associates with the viral polymerase to increase its processivity and forms high-affinity direct interactions with DNA. Facilitates the origin-binding protein loading onto DNA thus increasing its ability to assemble into a functional complex capable of unwinding duplex DNA. This chain is DNA polymerase processivity factor, found in Varicella-zoster virus (strain Oka vaccine) (HHV-3).